A 125-amino-acid chain; its full sequence is Large ribosomal subunit protein bL12 (125 aa).

This sequence belongs to the bacterial ribosomal protein bL12 family. Homodimer. Part of the 50S ribosomal subunit; present in 6 copies per ribosome. Forms part of the ribosomal stalk which helps the ribosome interact with GTP-bound translation factors. Forms a heptameric L10(L12)2(L12)2(L12)2 complex, where L10 forms an elongated spine to which 3 L12 dimers bind in a sequential fashion.

In terms of biological role, forms part of the ribosomal stalk which helps the ribosome interact with GTP-bound translation factors. Is thus essential for accurate translation. This Agrobacterium fabrum (strain C58 / ATCC 33970) (Agrobacterium tumefaciens (strain C58)) protein is Large ribosomal subunit protein bL12.